A 184-amino-acid polypeptide reads, in one-letter code: ATP synthase subunit b, chloroplastic (184 aa).

A helical transmembrane segment spans residues 27–49 (LATNPINLSVVLGVLIFFGKGVL).

This sequence belongs to the ATPase B chain family. As to quaternary structure, F-type ATPases have 2 components, F(1) - the catalytic core - and F(0) - the membrane proton channel. F(1) has five subunits: alpha(3), beta(3), gamma(1), delta(1), epsilon(1). F(0) has four main subunits: a(1), b(1), b'(1) and c(10-14). The alpha and beta chains form an alternating ring which encloses part of the gamma chain. F(1) is attached to F(0) by a central stalk formed by the gamma and epsilon chains, while a peripheral stalk is formed by the delta, b and b' chains.

The protein localises to the plastid. Its subcellular location is the chloroplast thylakoid membrane. F(1)F(0) ATP synthase produces ATP from ADP in the presence of a proton or sodium gradient. F-type ATPases consist of two structural domains, F(1) containing the extramembraneous catalytic core and F(0) containing the membrane proton channel, linked together by a central stalk and a peripheral stalk. During catalysis, ATP synthesis in the catalytic domain of F(1) is coupled via a rotary mechanism of the central stalk subunits to proton translocation. In terms of biological role, component of the F(0) channel, it forms part of the peripheral stalk, linking F(1) to F(0). The sequence is that of ATP synthase subunit b, chloroplastic from Phalaenopsis aphrodite subsp. formosana (Moth orchid).